A 418-amino-acid polypeptide reads, in one-letter code: MSLLDCFCASRTRVESLRPEKQSETSIHQYLVDESAISRPPPSARASEVICSTDVSHYELQVEIGRGFDNLTSVHLARHTPTGTLVTVKITNLESCTEERLKALQRAVILSHFFQHPNITTYWTVFTVGSWLWVISPFMAYGSASQLLRTYFPDGMSETLIRNILFGAVQGLNYLHQNGCIHRSFKASHILISGDGLVTLSGLSHLHSLLKHGQRHRAVFDFPQFSTSVQPWLSPELLRQDLHGYNVKSDIYSVGITACELASGQVPFQDMHRTQMLLQKLKGPPYSPLDVSIFPQSDSRMRNSQSGVDSGIGESVLVSTGTHTVNSDRLHTPSTKTFSPAFFSLVQLCLQQDPEKRPSASSLLSHVFFKQMKEESQDSILPLLPPAYNRPSASLQPVSPWSELEFQFPDDKDPVWEF.

Positions 58–369 constitute a Protein kinase domain; the sequence is YELQVEIGRG…ASSLLSHVFF (312 aa). Residues 64 to 72 and Lys89 each bind ATP; that span reads IGRGFDNLT.

It belongs to the protein kinase superfamily. STE Ser/Thr protein kinase family. STE20 subfamily. As to quaternary structure, component of a trimeric complex composed of STK11/LKB1, STRAD (STRADA or STRADB) and CAB39/MO25 (CAB39/MO25alpha or CAB39L/MO25beta): the complex tethers STK11/LKB1 in the cytoplasm and stimulates its catalytic activity. Interacts with BIRC4/XIAP. These two proteins are likely to coexist in a complex with TAK1, TRAF6, TAB1 and TAB2.

It localises to the nucleus. It is found in the cytoplasm. Functionally, pseudokinase which, in complex with CAB39/MO25 (CAB39/MO25alpha or CAB39L/MO25beta), binds to and activates STK11/LKB1. Adopts a closed conformation typical of active protein kinases and binds STK11/LKB1 as a pseudosubstrate, promoting conformational change of STK11/LKB1 in an active conformation. This is STE20-related kinase adapter protein beta (Stradb) from Mus musculus (Mouse).